Here is a 186-residue protein sequence, read N- to C-terminus: Peptide deformylase (186 aa).

2 residues coordinate Fe cation: Cys99 and His141. Glu142 is an active-site residue. His145 contacts Fe cation.

This sequence belongs to the polypeptide deformylase family. Requires Fe(2+) as cofactor.

It carries out the reaction N-terminal N-formyl-L-methionyl-[peptide] + H2O = N-terminal L-methionyl-[peptide] + formate. Removes the formyl group from the N-terminal Met of newly synthesized proteins. Requires at least a dipeptide for an efficient rate of reaction. N-terminal L-methionine is a prerequisite for activity but the enzyme has broad specificity at other positions. The sequence is that of Peptide deformylase from Chlamydia pneumoniae (Chlamydophila pneumoniae).